The chain runs to 1517 residues: DNA-directed RNA polymerase subunit beta' (1517 aa).

Cys71, Cys73, Cys86, and Cys89 together coordinate Zn(2+). The Mg(2+) site is built by Asp482, Asp484, and Asp486. Residues Cys812, Cys886, Cys893, and Cys896 each coordinate Zn(2+).

This sequence belongs to the RNA polymerase beta' chain family. The RNAP catalytic core consists of 2 alpha, 1 beta, 1 beta' and 1 omega subunit. When a sigma factor is associated with the core the holoenzyme is formed, which can initiate transcription. It depends on Mg(2+) as a cofactor. The cofactor is Zn(2+).

The catalysed reaction is RNA(n) + a ribonucleoside 5'-triphosphate = RNA(n+1) + diphosphate. Its function is as follows. DNA-dependent RNA polymerase catalyzes the transcription of DNA into RNA using the four ribonucleoside triphosphates as substrates. This chain is DNA-directed RNA polymerase subunit beta', found in Campylobacter lari (strain RM2100 / D67 / ATCC BAA-1060).